The primary structure comprises 105 residues: U21-theraphotoxin-Cg1a 4 (105 aa).

A signal peptide spans 1–21; it reads MKVSVLITLAVLGVMFLLTSA. Residues 22–48 constitute a propeptide that is removed on maturation; sequence EERGSDQMDSPAWLKSMEIIFQSEERE. Cystine bridges form between cysteine 49–cysteine 63, cysteine 56–cysteine 68, and cysteine 62–cysteine 76. Valine amide is present on valine 82. Residues 83-105 constitute a propeptide that is removed on maturation; the sequence is GKWEMLINMNIFRIVFSYSMCTV.

Belongs to the neurotoxin 10 (Hwtx-1) family. 05 (F4a) subfamily. As to expression, expressed by the venom gland.

Its subcellular location is the secreted. In terms of biological role, probable ion channel inhibitor. This chain is U21-theraphotoxin-Cg1a 4, found in Chilobrachys guangxiensis (Chinese earth tiger tarantula).